The following is a 382-amino-acid chain: Anhydro-N-acetylmuramic acid kinase (382 aa).

Position 22 to 29 (22 to 29 (GTSMDGVD)) interacts with ATP.

It belongs to the anhydro-N-acetylmuramic acid kinase family.

The catalysed reaction is 1,6-anhydro-N-acetyl-beta-muramate + ATP + H2O = N-acetyl-D-muramate 6-phosphate + ADP + H(+). Its pathway is amino-sugar metabolism; 1,6-anhydro-N-acetylmuramate degradation. It participates in cell wall biogenesis; peptidoglycan recycling. Catalyzes the specific phosphorylation of 1,6-anhydro-N-acetylmuramic acid (anhMurNAc) with the simultaneous cleavage of the 1,6-anhydro ring, generating MurNAc-6-P. Is required for the utilization of anhMurNAc either imported from the medium or derived from its own cell wall murein, and thus plays a role in cell wall recycling. The polypeptide is Anhydro-N-acetylmuramic acid kinase (Burkholderia vietnamiensis (strain G4 / LMG 22486) (Burkholderia cepacia (strain R1808))).